Reading from the N-terminus, the 425-residue chain is MLDLKRIRTDFDTVAAKLKNRGVSEDTLTHLKELDEKRRALLVQSEELKAERNIASAAIAQAKRQKEDATQQIADMQKVSADIKTIDNQLVAIDQQVTDIITVLPNTPHDSVPVGADEEDNVEIRRWGTPRDFDFEVKAHWDLGEDLDILDWERGAKVTGARFLFYKNLGARLERALYNFMLDEHIKEGYQEIITPYMVNHDSMFGTGQYPKFKEDTFELADTNFVLIPTAEVPLTNYYRGEILDGKELPIYFTAMSPSFRSEAGSAGRDTRGLIRLHQFHKVEMVKFAKPEESYQELEKMTANAENILQKLGLPYRVISLCTGDMGFSAAKTYDLEVWIPAQNTYREISSCSNTEDFQARRAQIRYRDEADGKVKLLHTLNGSGLAVGRTVAAILENYQNEDGSVTIPEVLRSYMGGETVISPK.

230–232 contacts L-serine; the sequence is TAE. Position 261 to 263 (261 to 263) interacts with ATP; it reads RSE. Residue glutamate 284 participates in L-serine binding. 348–351 provides a ligand contact to ATP; sequence EISS. Serine 384 contacts L-serine.

Belongs to the class-II aminoacyl-tRNA synthetase family. Type-1 seryl-tRNA synthetase subfamily. Homodimer. The tRNA molecule binds across the dimer.

The protein resides in the cytoplasm. It catalyses the reaction tRNA(Ser) + L-serine + ATP = L-seryl-tRNA(Ser) + AMP + diphosphate + H(+). The enzyme catalyses tRNA(Sec) + L-serine + ATP = L-seryl-tRNA(Sec) + AMP + diphosphate + H(+). It functions in the pathway aminoacyl-tRNA biosynthesis; selenocysteinyl-tRNA(Sec) biosynthesis; L-seryl-tRNA(Sec) from L-serine and tRNA(Sec): step 1/1. Functionally, catalyzes the attachment of serine to tRNA(Ser). Is also able to aminoacylate tRNA(Sec) with serine, to form the misacylated tRNA L-seryl-tRNA(Sec), which will be further converted into selenocysteinyl-tRNA(Sec). This is Serine--tRNA ligase from Streptococcus pyogenes serotype M28 (strain MGAS6180).